The primary structure comprises 355 residues: Uroporphyrinogen decarboxylase (355 aa).

Residues 27 to 31 (RQAGR), aspartate 78, tyrosine 155, serine 210, and histidine 328 contribute to the substrate site.

The protein belongs to the uroporphyrinogen decarboxylase family. In terms of assembly, homodimer.

It is found in the cytoplasm. The catalysed reaction is uroporphyrinogen III + 4 H(+) = coproporphyrinogen III + 4 CO2. It functions in the pathway porphyrin-containing compound metabolism; protoporphyrin-IX biosynthesis; coproporphyrinogen-III from 5-aminolevulinate: step 4/4. Functionally, catalyzes the decarboxylation of four acetate groups of uroporphyrinogen-III to yield coproporphyrinogen-III. The sequence is that of Uroporphyrinogen decarboxylase from Ectopseudomonas mendocina (strain ymp) (Pseudomonas mendocina).